The primary structure comprises 116 residues: NADH-quinone oxidoreductase subunit A (116 aa).

The next 3 helical transmembrane spans lie at 3-23 (FTFL…VIAL), 61-81 (FAIL…WAVV), and 88-108 (QGLV…AYAW).

The protein belongs to the complex I subunit 3 family. As to quaternary structure, NDH-1 is composed of 14 different subunits. Subunits NuoA, H, J, K, L, M, N constitute the membrane sector of the complex.

The protein resides in the cell inner membrane. The catalysed reaction is a quinone + NADH + 5 H(+)(in) = a quinol + NAD(+) + 4 H(+)(out). In terms of biological role, NDH-1 shuttles electrons from NADH, via FMN and iron-sulfur (Fe-S) centers, to quinones in the respiratory chain. The immediate electron acceptor for the enzyme in this species is believed to be a menaquinone. Couples the redox reaction to proton translocation (for every two electrons transferred, four hydrogen ions are translocated across the cytoplasmic membrane), and thus conserves the redox energy in a proton gradient. This chain is NADH-quinone oxidoreductase subunit A, found in Bacteroides thetaiotaomicron (strain ATCC 29148 / DSM 2079 / JCM 5827 / CCUG 10774 / NCTC 10582 / VPI-5482 / E50).